The sequence spans 397 residues: Protein ROH1D (397 aa).

The chain crosses the membrane as a helical span at residues 247–267; the sequence is LIVPVYTMTTVLLFVMWALVA.

Belongs to the ROH1 family. Interacts with EXO70C2. In terms of tissue distribution, mostly expressed in mature pollen.

It is found in the membrane. The protein resides in the cytoplasm. It localises to the cytosol. Involved in the regulation of plant growth, and modulates pollen development to ensure male fertility. May also affect the composition of the inner seed coat mucilage layer. This is Protein ROH1D from Arabidopsis thaliana (Mouse-ear cress).